The chain runs to 72 residues: Translation initiation factor IF-1 (72 aa).

The S1-like domain maps to 1 to 72 (MSKTDVVEIE…TKGRIIWRDK (72 aa)).

This sequence belongs to the IF-1 family. Component of the 30S ribosomal translation pre-initiation complex which assembles on the 30S ribosome in the order IF-2 and IF-3, IF-1 and N-formylmethionyl-tRNA(fMet); mRNA recruitment can occur at any time during PIC assembly.

Its subcellular location is the cytoplasm. Its function is as follows. One of the essential components for the initiation of protein synthesis. Stabilizes the binding of IF-2 and IF-3 on the 30S subunit to which N-formylmethionyl-tRNA(fMet) subsequently binds. Helps modulate mRNA selection, yielding the 30S pre-initiation complex (PIC). Upon addition of the 50S ribosomal subunit IF-1, IF-2 and IF-3 are released leaving the mature 70S translation initiation complex. The protein is Translation initiation factor IF-1 of Lachnoclostridium phytofermentans (strain ATCC 700394 / DSM 18823 / ISDg) (Clostridium phytofermentans).